A 703-amino-acid polypeptide reads, in one-letter code: Elongation factor G (703 aa).

The tr-type G domain maps to 9 to 292 (ERTRNIGIMA…AVVDYLPGPL (284 aa)). GTP-binding positions include 18 to 25 (AHIDAGKT), 91 to 95 (DTPGH), and 145 to 148 (NKMD).

This sequence belongs to the TRAFAC class translation factor GTPase superfamily. Classic translation factor GTPase family. EF-G/EF-2 subfamily.

The protein resides in the cytoplasm. Its function is as follows. Catalyzes the GTP-dependent ribosomal translocation step during translation elongation. During this step, the ribosome changes from the pre-translocational (PRE) to the post-translocational (POST) state as the newly formed A-site-bound peptidyl-tRNA and P-site-bound deacylated tRNA move to the P and E sites, respectively. Catalyzes the coordinated movement of the two tRNA molecules, the mRNA and conformational changes in the ribosome. This is Elongation factor G from Leuconostoc citreum (strain KM20).